The following is a 421-amino-acid chain: Acetate kinase (421 aa).

Mg(2+) is bound at residue Asn-7. Lys-14 contacts ATP. Arg-91 is a binding site for substrate. The Proton donor/acceptor role is filled by Asp-148. Residues His-208 to Gly-212 and Asp-283 to Arg-285 contribute to the ATP site. Position 387 (Glu-387) interacts with Mg(2+).

Belongs to the acetokinase family. In terms of assembly, homodimer. It depends on Mg(2+) as a cofactor. Mn(2+) is required as a cofactor.

It is found in the cytoplasm. It carries out the reaction acetate + ATP = acetyl phosphate + ADP. Its pathway is metabolic intermediate biosynthesis; acetyl-CoA biosynthesis; acetyl-CoA from acetate: step 1/2. Its function is as follows. Catalyzes the formation of acetyl phosphate from acetate and ATP. Can also catalyze the reverse reaction. The sequence is that of Acetate kinase from Geobacter metallireducens (strain ATCC 53774 / DSM 7210 / GS-15).